The chain runs to 187 residues: Ribosome-recycling factor (187 aa).

It belongs to the RRF family.

The protein resides in the cytoplasm. Responsible for the release of ribosomes from messenger RNA at the termination of protein biosynthesis. May increase the efficiency of translation by recycling ribosomes from one round of translation to another. In Bradyrhizobium sp. (strain BTAi1 / ATCC BAA-1182), this protein is Ribosome-recycling factor.